The following is a 478-amino-acid chain: Probable cytosol aminopeptidase (478 aa).

2 residues coordinate Mn(2+): Lys244 and Asp249. Residue Lys256 is part of the active site. Asp267, Asp326, and Glu328 together coordinate Mn(2+). Arg330 is a catalytic residue.

This sequence belongs to the peptidase M17 family. Requires Mn(2+) as cofactor.

It is found in the cytoplasm. The catalysed reaction is Release of an N-terminal amino acid, Xaa-|-Yaa-, in which Xaa is preferably Leu, but may be other amino acids including Pro although not Arg or Lys, and Yaa may be Pro. Amino acid amides and methyl esters are also readily hydrolyzed, but rates on arylamides are exceedingly low.. It carries out the reaction Release of an N-terminal amino acid, preferentially leucine, but not glutamic or aspartic acids.. Presumably involved in the processing and regular turnover of intracellular proteins. Catalyzes the removal of unsubstituted N-terminal amino acids from various peptides. The chain is Probable cytosol aminopeptidase from Fusobacterium nucleatum subsp. nucleatum (strain ATCC 25586 / DSM 15643 / BCRC 10681 / CIP 101130 / JCM 8532 / KCTC 2640 / LMG 13131 / VPI 4355).